Reading from the N-terminus, the 91-residue chain is Elongation factor 1-beta (91 aa).

Belongs to the EF-1-beta/EF-1-delta family.

Its function is as follows. Promotes the exchange of GDP for GTP in EF-1-alpha/GDP, thus allowing the regeneration of EF-1-alpha/GTP that could then be used to form the ternary complex EF-1-alpha/GTP/AAtRNA. The chain is Elongation factor 1-beta from Sulfurisphaera tokodaii (strain DSM 16993 / JCM 10545 / NBRC 100140 / 7) (Sulfolobus tokodaii).